The sequence spans 200 residues: Putative pseudouridine methyltransferase (200 aa).

S-adenosyl-L-methionine contacts are provided by Met133 and Cys187.

This sequence belongs to the methyltransferase superfamily. TrmY family.

Its subcellular location is the cytoplasm. The sequence is that of Putative pseudouridine methyltransferase from Alcanivorax borkumensis (strain ATCC 700651 / DSM 11573 / NCIMB 13689 / SK2).